We begin with the raw amino-acid sequence, 320 residues long: MSYSDLKLFALSSNKELAEKVASAMGIQLGKSTVRQFSDGEIQVNIEESIRGHHVFILQSTSSPVNDNLMEILIMVDALKRASAEKISVVMPYYGYARQDRKARSREPITSKLVANMLEVAGVDRLLTVDLHAAQIQGFFDIPVDHLMGAPLIADYFDRHGLVGEDVVVVSPDHGGVTRARKLAQFLQTPIAIIDKRRSVDKMNTSEVMNIIGNVSGKKCILIDDMIDTAGTICHAADALAEAGATAVYASCTHPVLSGPALDNIQRSAIEKLIVLDTIYLPKERLIDKIEQISIADLVAEAIIRIHEKRPLSPLFEMGN.

Residues 39–41 (DGE) and 98–99 (RQ) each bind ATP. Histidine 132 and aspartate 173 together coordinate Mg(2+). Lysine 196 is an active-site residue. D-ribose 5-phosphate contacts are provided by residues arginine 198, aspartate 224, and 228 to 232 (DTAGT).

Belongs to the ribose-phosphate pyrophosphokinase family. Class I subfamily. Homohexamer. Mg(2+) is required as a cofactor.

It is found in the cytoplasm. It carries out the reaction D-ribose 5-phosphate + ATP = 5-phospho-alpha-D-ribose 1-diphosphate + AMP + H(+). It participates in metabolic intermediate biosynthesis; 5-phospho-alpha-D-ribose 1-diphosphate biosynthesis; 5-phospho-alpha-D-ribose 1-diphosphate from D-ribose 5-phosphate (route I): step 1/1. Involved in the biosynthesis of the central metabolite phospho-alpha-D-ribosyl-1-pyrophosphate (PRPP) via the transfer of pyrophosphoryl group from ATP to 1-hydroxyl of ribose-5-phosphate (Rib-5-P). This chain is Ribose-phosphate pyrophosphokinase 1, found in Streptococcus pyogenes serotype M1.